Consider the following 228-residue polypeptide: tRNA (guanine-N(1)-)-methyltransferase (228 aa).

S-adenosyl-L-methionine contacts are provided by residues G111 and 130–135; that span reads IGDFVL.

This sequence belongs to the RNA methyltransferase TrmD family. Homodimer.

It is found in the cytoplasm. It catalyses the reaction guanosine(37) in tRNA + S-adenosyl-L-methionine = N(1)-methylguanosine(37) in tRNA + S-adenosyl-L-homocysteine + H(+). In terms of biological role, specifically methylates guanosine-37 in various tRNAs. The chain is tRNA (guanine-N(1)-)-methyltransferase from Ureaplasma urealyticum serovar 10 (strain ATCC 33699 / Western).